We begin with the raw amino-acid sequence, 1197 residues long: Envelopment polyprotein (1197 aa).

The N-terminal stretch at 1–16 (MYVLLTILTSVLVCEA) is a signal peptide. Residues 17-130 (IIRVSLSSTR…RDAKQIGRKT (114 aa)) are Cytoplasmic-facing. Residues 131–153 (MAGIAMTVLPALAVFALAPVVFA) are internal signal sequence for glycoprotein N. The Lumenal portion of the chain corresponds to 154 to 582 (EDPHLRNRPG…GLINYQCHTA (429 aa)). Cystine bridges form between cysteine 179-cysteine 188, cysteine 229-cysteine 239, cysteine 250-cysteine 281, cysteine 271-cysteine 284, cysteine 304-cysteine 456, cysteine 322-cysteine 332, cysteine 374-cysteine 434, cysteine 402-cysteine 413, cysteine 420-cysteine 425, cysteine 479-cysteine 482, cysteine 486-cysteine 556, and cysteine 506-cysteine 511. The chain crosses the membrane as a helical span at residues 583–603 (LSAFVVVFVFSSIAIICLAIL). The Cytoplasmic portion of the chain corresponds to 604-673 (YRVLKCLKIA…APIPRHAPIP (70 aa)). Positions 608 to 650 (KCLKIAPRKVLNPLMWITAFIRWIYKKMVARVADNINQVNREI) are golgi retention signal. The tract at residues 646 to 650 (VNREI) is important for correct targeting of the glycoproteins to the Golgi complex but not for heterodimerization. The segment at 675–690 (YSTYLMLLLIVSYASA) is internal signal sequence for glycoprotein C. 12 cysteine pairs are disulfide-bonded: cysteine 691/cysteine 731, cysteine 704/cysteine 713, cysteine 756/cysteine 852, cysteine 771/cysteine 965, cysteine 777/cysteine 825, cysteine 783/cysteine 832, cysteine 788/cysteine 814, cysteine 818/cysteine 823, cysteine 934/cysteine 947, cysteine 1029/cysteine 1101, cysteine 1039/cysteine 1042, and cysteine 1049/cysteine 1083. Over 691–1159 (CSELIQASSR…MSWFGGPLKT (469 aa)) the chain is Lumenal. The segment at 777 to 783 (CHLVGEC) is fusion loop. Asparagine 794 carries N-linked (GlcNAc...) asparagine; by host glycosylation. A fusion loop region spans residues 819–830 (GGWGCGCFNVNP). A glycan (N-linked (GlcNAc...) asparagine; by host) is linked at asparagine 1035. An N-linked (GlcNAc...) asparagine; by host glycan is attached at asparagine 1077. The helical transmembrane segment at 1160-1180 (ILLICLYVALSIGLFFLLIYL) threads the bilayer. Over 1181 to 1197 (GGTGLSKMWLAATKKAS) the chain is Cytoplasmic.

It belongs to the phlebovirus envelope glycoprotein family. In terms of assembly, heterodimer with glycoprotein C. Homotrimer (postfusion). Interacts with nucleocapsid protein N and with the polymerase L in order to package them into virus particles. Interacts with host E3 ubiquitin-protein ligase UBR4; this interaction is important for viral RNA production. Interacts with host LRP1; this interaction facilitates virus entry into the host cell. Heterodimer with glycoprotein C. Post-translationally, specific enzymatic cleavages in vivo yield mature proteins including NSm protein, Glycoprotein C, and Glycoprotein N. In terms of processing, glycosylated. The glycans can attach to host CD209/DC-SIGN, and may play a role in virus entry into dendritic cells. Palmitoylated.

Its subcellular location is the virion membrane. It is found in the host Golgi apparatus membrane. The protein localises to the host endoplasmic reticulum membrane. The protein resides in the host mitochondrion outer membrane. It localises to the host Golgi apparatus. Its subcellular location is the virion. In terms of biological role, structural component of the virion that interacts with glycoprotein C. It shields the hydrophobic fusion loops of the glycoprotein C, preventing premature fusion. The glycoprotein protrusions are arranged on an icosahedral lattice, with T=12 triangulation. They are able to attach the virion to the host cell receptor CD209/DC-SIGN and to promote fusion of membranes with the late endosome after endocytosis of the virion. Plays a role in the packaging of ribonucleoproteins and polymerase during virus assembly. Functionally, structural component of the virion that interacts with glycoprotein N. Acts as a class II fusion protein that is activated upon acidification and subsequent repositioning of the glycoprotein N. The glycoprotein protrusions are arranged on an icosahedral lattice, with T=12 triangulation. They are able to attach the virion to the host cell receptor CD209/DC-SIGN and to promote fusion of membranes with the late endosome after endocytosis of the virion. Plays a role in the inhibition of virus-induced apoptosis. Plays a role for virus dissemination in vertebrates. Its function is as follows. Plays a role for virus dissemination in mosquitoes. May act as a structural virion protein in insects. This is Envelopment polyprotein (GP) from Rift valley fever virus (strain ZH-548 M12) (RVFV).